Reading from the N-terminus, the 474-residue chain is Carbohydrate sulfotransferase 3 (474 aa).

The Cytoplasmic segment spans residues 1–19 (MEKGLALPQDCRDLVHNLK). The chain crosses the membrane as a helical; Signal-anchor for type II membrane protein span at residues 20-38 (IRGRYVLFLAFVVIVFIFI). The Lumenal portion of the chain corresponds to 39–474 (EKENKIISRV…LEERGTFWVT (436 aa)). Residues asparagine 63, asparagine 74, and asparagine 96 are each glycosylated (N-linked (GlcNAc...) asparagine). 137–143 (TRTGSSF) is a binding site for 3'-phosphoadenylyl sulfate. A glycan (N-linked (GlcNAc...) asparagine) is linked at asparagine 252. 297 to 305 (RDPRAVLAS) is a 3'-phosphoadenylyl sulfate binding site. N-linked (GlcNAc...) asparagine glycans are attached at residues asparagine 415 and asparagine 459.

The protein belongs to the sulfotransferase 1 family. Gal/GlcNAc/GalNAc subfamily. Post-translationally, N-glycosylated.

The protein localises to the golgi apparatus membrane. The enzyme catalyses chondroitin beta-D-glucuronate + n 3'-phosphoadenylyl sulfate = chondroitin 6'-sulfate + n adenosine 3',5'-bisphosphate + n H(+). It catalyses the reaction 3'-phosphoadenylyl sulfate + keratan = adenosine 3',5'-bisphosphate + keratan 6'-sulfate.. Its function is as follows. Sulfotransferase that utilizes 3'-phospho-5'-adenylyl sulfate (PAPS) as sulfonate donor to catalyze the transfer of sulfate to position 6 of the N-acetylgalactosamine (GalNAc) residue of chondroitin. Chondroitin sulfate constitutes the predominant proteoglycan present in cartilage and is distributed on the surfaces of many cells and extracellular matrices. Catalyzes with a lower efficiency the sulfation of Gal residues of keratan sulfate, another glycosaminoglycan. Can also catalyze the sulfation of the Gal residues in sialyl N-acetyllactosamine (sialyl LacNAc) oligosaccharides. May play a role in the maintenance of naive T-lymphocytes in the spleen. The sequence is that of Carbohydrate sulfotransferase 3 (Chst3) from Rattus norvegicus (Rat).